We begin with the raw amino-acid sequence, 106 residues long: Insulin-like peptide 04 (106 aa).

Positions M1–A22 are cleaved as a signal peptide. Positions L23–S37 are excised as a propeptide. Cystine bridges form between C45–C50, C46–C80, and C59–C68. The propeptide at R86 to R106 is c peptide.

Belongs to the insulin family.

It localises to the secreted. Its function is as follows. Insulin decreases blood glucose concentration. May have evolved to activate insulin receptors (INSR) in vertebrates. Molecular docking studies reveals unique interaction with the human insulin receptor. In vivo, insulin-like peptide injection reduces blood glucose levels in two models of zebrafish diabetes (streptozotocin- and glucose-induced). Also shorter swimming distance of zebrafish larvae, an effect which is not observed with human insulin. In Exaiptasia diaphana (Tropical sea anemone), this protein is Insulin-like peptide 04.